Reading from the N-terminus, the 762-residue chain is ATP-dependent RNA helicase SUV3 homolog, mitochondrial (762 aa).

A mitochondrion-targeting transit peptide spans 1-36 (MQNTRRCISLICVTRQPPSLRATYGAVAAARCLHRA). The Helicase ATP-binding domain maps to 181–321 (NARALTRKIV…ALELLQKICE (141 aa)). 194 to 201 (GPTNSGKT) lines the ATP pocket. The region spanning 331-508 (RYDRLTELTV…PTADQIELYA (178 aa)) is the Helicase C-terminal domain. A disordered region spans residues 716-762 (EWDAQQVGQAAAASTSSKESQESPPDDSDDEDSYPGSYKKTRRKRRK). A compositionally biased stretch (polar residues) spans 721-730 (QVGQAAAAST). A compositionally biased stretch (acidic residues) spans 739–748 (PPDDSDDEDS).

The protein belongs to the helicase family. It depends on Mg(2+) as a cofactor. The cofactor is Mn(2+).

It is found in the mitochondrion. The enzyme catalyses ATP + H2O = ADP + phosphate + H(+). Its function is as follows. Major helicase player in mitochondrial RNA metabolism and maintenance. Likely component of the mitochondrial degradosome (mtEXO) complex, that degrades 3' overhang double-stranded RNA with a 3'-to-5' directionality in an ATP-dependent manner. ATPase and ATP-dependent multisubstrate helicase, able to unwind double-stranded (ds) DNA and RNA, and RNA/DNA heteroduplexes in the 5'-to-3' direction. Regulates mRNA stability and is required for the correct processing and maturation of mitochondrial transcripts. The sequence is that of ATP-dependent RNA helicase SUV3 homolog, mitochondrial from Drosophila pseudoobscura pseudoobscura (Fruit fly).